Consider the following 394-residue polypeptide: Phosphorylated adapter RNA export protein (394 aa).

The segment covering 1 to 18 (MALEVGDMEDGQLSDSDS) has biased composition (acidic residues). The disordered stretch occupies residues 1–33 (MALEVGDMEDGQLSDSDSDMTVAPSDRPLQLPK). A2 is modified (N-acetylalanine). The necessary for interaction with CBP80 stretch occupies residues 2 to 329 (ALEVGDMEDG…KAARKRRTQV (328 aa)). Residues S14, S16, S65, S66, S69, and S73 each carry the phosphoserine modification. Positions 81-84 (KRKR) match the Nuclear localization signal motif. Residues 83-111 (KRQKCFNPPPKPEPFQFGQSSQKPPVAGG) form a disordered region. The Nuclear export signal motif lies at 130–139 (VATELGILGM). The segment covering 183–193 (KKMGSKEEENG) has biased composition (basic and acidic residues). Residues 183 to 211 (KKMGSKEEENGQGHLKRKRPVKDRLGNRP) form a disordered region. Residues 198 to 201 (KRKR) carry the Nuclear localization signal motif. Phosphoserine is present on S226. Positions 228 to 328 (EKVADEISFR…KKAARKRRTQ (101 aa)) are sufficient for poly U RNA-binding. The necessary for poly U RNA-binding and snRNA export stretch occupies residues 279 to 287 (GSRRRTPGG). T296 is modified (phosphothreonine). Phosphoserine is present on residues S356 and S368.

It belongs to the PHAX family. Found in a U snRNA export complex with PHAX/RNUXA, NCBP1/CBP80, NCBP2/CBP20, RAN, XPO1 and m7G-capped RNA. Part of a precomplex with PHAX/RNUXA, NCBP1/CBP80, NCBP2/CBP20 and m7G-capped RNA. Interacts with NCBP1/CBP80. Found in a complex with snoRNA. Interacts with NCBP2/CBP20. Interacts with DDX39A; this interaction stimulates PHAX RNA binding activity. Post-translationally, phosphorylated in the nucleus. Dephosphorylated in the cytoplasm.

It localises to the nucleus. The protein resides in the nucleoplasm. The protein localises to the cajal body. It is found in the cytoplasm. Functionally, a phosphoprotein adapter involved in the XPO1-mediated U snRNA export from the nucleus. Bridge components required for U snRNA export, the cap binding complex (CBC)-bound snRNA on the one hand and the GTPase Ran in its active GTP-bound form together with the export receptor XPO1 on the other. Its phosphorylation in the nucleus is required for U snRNA export complex assembly and export, while its dephosphorylation in the cytoplasm causes export complex disassembly. It is recycled back to the nucleus via the importin alpha/beta heterodimeric import receptor. The directionality of nuclear export is thought to be conferred by an asymmetric distribution of the GTP- and GDP-bound forms of Ran between the cytoplasm and nucleus. Its compartmentalized phosphorylation cycle may also contribute to the directionality of export. Binds strongly to m7G-capped U1 and U5 small nuclear RNAs (snRNAs) in a sequence-unspecific manner and phosphorylation-independent manner. Also plays a role in the biogenesis of U3 small nucleolar RNA (snoRNA). Involved in the U3 snoRNA transport from nucleoplasm to Cajal bodies. Binds strongly to m7G-capped U3, U8 and U13 precursor snoRNAs and weakly to trimethylated (TMG)-capped U3, U8 and U13 snoRNAs. Also binds to telomerase RNA. The polypeptide is Phosphorylated adapter RNA export protein (PHAX) (Homo sapiens (Human)).